A 427-amino-acid chain; its full sequence is ATP-sensitive inward rectifier potassium channel 12 (427 aa).

Over 1-77 the chain is Cytoplasmic; the sequence is MTASGRTNPY…LADMFTTCVD (77 aa). Cys-75 carries the post-translational modification S-nitrosocysteine. The chain crosses the membrane as a helical span at residues 78–104; the sequence is IRWRYMLLIFSLAFLASWLLFGVIFWV. A 1,2-diacyl-sn-glycero-3-phospho-(1D-myo-inositol-4,5-bisphosphate) is bound by residues Arg-79 and Arg-81. Residues 105–129 are Extracellular-facing; sequence IAVAHGDLEPAEAHGRTPCVLQVHG. A disulfide bridge connects residues Cys-123 and Cys-155. Residues 130–146 constitute an intramembrane region (helical; Pore-forming); sequence FMAAFLFSIETQTTIGY. Residues Thr-143, Ile-144, Gly-145, and Tyr-146 each contribute to the K(+) site. Residues 143–148 carry the Selectivity filter motif; the sequence is TIGYGL. At 147-155 the chain is on the extracellular side; sequence GLRCVTEEC. A helical transmembrane segment spans residues 156–183; it reads PVAVFMVVAQSIVGCIIDSFMIGAIMAK. The a 1,2-diacyl-sn-glycero-3-phospho-(1D-myo-inositol-4,5-bisphosphate) site is built by Lys-183 and Lys-188. Over 184–427 the chain is Cytoplasmic; the sequence is MARPKKRAQT…QRPYRRESEI (244 aa). A compositionally biased stretch (acidic residues) spans 387–396; that stretch reads DEEDEVDGEQ. Residues 387–427 form a disordered region; the sequence is DEEDEVDGEQDSLGPQARRDFDRPQAGTALEQRPYRRESEI. Residues 425-427 carry the PDZ-binding motif; that stretch reads SEI.

The protein belongs to the inward rectifier-type potassium channel (TC 1.A.2.1) family. KCNJ12 subfamily. As to quaternary structure, homotetramer. Forms heteromer with KCNJ4. Association, via its PDZ-recognition domain, with LIN7A, LIN7B, LIN7C, DLG1, CASK and APBA1 plays a key role in its localization and trafficking.

It localises to the membrane. It catalyses the reaction K(+)(in) = K(+)(out). Activated by phosphatidylinositol 4,5-biphosphate (PtdIns(4,5)P2). PtdIns(4,5)P2 binding to the cytoplasmic side of the channel triggers a conformation change leading to channel opening. In terms of biological role, inward rectifying potassium channel that probably participates in controlling the resting membrane potential in electrically excitable cells. Probably participates in establishing action potential waveform and excitability of neuronal and muscle tissues. Inward rectifier potassium channels are characterized by a greater tendency to allow potassium to flow into the cell rather than out of it. Their voltage dependence is regulated by the concentration of extracellular potassium; as external potassium is raised, the voltage range of the channel opening shifts to more positive voltages. The inward rectification is mainly due to the blockage of outward current by internal magnesium. In Bos taurus (Bovine), this protein is ATP-sensitive inward rectifier potassium channel 12 (KCNJ12).